The primary structure comprises 204 residues: MPYPFKLPELGYPYEALEPHIDARTMEIHHQKHHGAYVTNLNAALEKYPYLQGAEVETLLRHLTALPADIQAAVRNNGGGHLNHSLFWRLLTPGGAKEPVGELKKAIDEQFGGFAALKEKLTQAAMGRFGSGWAWLVKDPFGKLHVISTANQDNPVMGGFAPIVGIDVWEHAYYLKYQNRRADYLQAIWNVLNWDVAEEIYKGA.

4 residues coordinate Mn(2+): His29, His84, Asp167, and His171.

This sequence belongs to the iron/manganese superoxide dismutase family. In terms of assembly, homotetramer. It depends on Mn(2+) as a cofactor.

It carries out the reaction 2 superoxide + 2 H(+) = H2O2 + O2. In terms of biological role, destroys superoxide anion radicals which are normally produced within the cells and which are toxic to biological systems. The protein is Superoxide dismutase [Mn] (sodA) of Thermus aquaticus.